The following is a 395-amino-acid chain: ATP phosphoribosyltransferase regulatory subunit (395 aa).

The protein belongs to the class-II aminoacyl-tRNA synthetase family. HisZ subfamily. In terms of assembly, heteromultimer composed of HisG and HisZ subunits.

The protein localises to the cytoplasm. It functions in the pathway amino-acid biosynthesis; L-histidine biosynthesis; L-histidine from 5-phospho-alpha-D-ribose 1-diphosphate: step 1/9. Required for the first step of histidine biosynthesis. May allow the feedback regulation of ATP phosphoribosyltransferase activity by histidine. This is ATP phosphoribosyltransferase regulatory subunit from Pseudomonas savastanoi pv. phaseolicola (strain 1448A / Race 6) (Pseudomonas syringae pv. phaseolicola (strain 1448A / Race 6)).